Here is a 480-residue protein sequence, read N- to C-terminus: tRNA modification GTPase MnmE (480 aa).

(6S)-5-formyl-5,6,7,8-tetrahydrofolate-binding residues include R20, E114, and K154. Positions 250–406 constitute a TrmE-type G domain; sequence GLKLAIIGPP…ILKNIENIAE (157 aa). N260 is a K(+) binding site. Residues 260-265, 279-285, and 304-307 contribute to the GTP site; these read NVGKSS, SNIAGTT, and DTAG. S264 is a Mg(2+) binding site. K(+) contacts are provided by S279, I281, and T284. Residue T285 participates in Mg(2+) binding. A (6S)-5-formyl-5,6,7,8-tetrahydrofolate-binding site is contributed by K480.

This sequence belongs to the TRAFAC class TrmE-Era-EngA-EngB-Septin-like GTPase superfamily. TrmE GTPase family. In terms of assembly, homodimer. Heterotetramer of two MnmE and two MnmG subunits. Requires K(+) as cofactor.

It localises to the cytoplasm. Its function is as follows. Exhibits a very high intrinsic GTPase hydrolysis rate. Involved in the addition of a carboxymethylaminomethyl (cmnm) group at the wobble position (U34) of certain tRNAs, forming tRNA-cmnm(5)s(2)U34. In Rickettsia felis (strain ATCC VR-1525 / URRWXCal2) (Rickettsia azadi), this protein is tRNA modification GTPase MnmE.